The following is a 226-amino-acid chain: Uracil-DNA glycosylase (226 aa).

Residue Asp-64 is the Proton acceptor of the active site.

Belongs to the uracil-DNA glycosylase (UDG) superfamily. UNG family.

The protein resides in the cytoplasm. The catalysed reaction is Hydrolyzes single-stranded DNA or mismatched double-stranded DNA and polynucleotides, releasing free uracil.. Its function is as follows. Excises uracil residues from the DNA which can arise as a result of misincorporation of dUMP residues by DNA polymerase or due to deamination of cytosine. In Vibrio campbellii (strain ATCC BAA-1116), this protein is Uracil-DNA glycosylase.